Consider the following 450-residue polypeptide: Sorting nexin-4 (450 aa).

Methionine 1 is subject to N-acetylmethionine. The disordered stretch occupies residues 1–53 (MEQAAPDPERLWQPAPLEPLSHPDAGLESMVGEETKGARDEGPGDGTMTENNF). Residues 33–42 (EETKGARDEG) show a composition bias toward basic and acidic residues. Residues 61-187 (SVSEAEKRTG…YLFLTQEGNW (127 aa)) enclose the PX domain. Positions 106, 108, 132, and 154 each coordinate a 1,2-diacyl-sn-glycero-3-phospho-(1D-myo-inositol-3-phosphate).

The protein belongs to the sorting nexin family. Heterodimer; heterodimerizes with SNX7 or SNX30. Interacts with WWC1/KIBRA. Identified in a complex with WWC1/KIBRA and dynein components DYNLL1 and DYNC1I2. Interacts with BIN1.

It localises to the early endosome. The protein resides in the early endosome membrane. In terms of biological role, involved in the regulation of endocytosis and in several stages of intracellular trafficking. Plays a role in recycling endocytosed transferrin receptor and prevent its degradation. Involved in autophagosome assembly by regulating trafficking and recycling of phospholipid scramblase ATG9A. The sequence is that of Sorting nexin-4 from Bos taurus (Bovine).